The following is a 303-amino-acid chain: Heme A synthase (303 aa).

The Cytoplasmic portion of the chain corresponds to 1-8; that stretch reads MFGKKNLK. A helical membrane pass occupies residues 9–29; sequence WLGVVATLMMTFVQLGGALVT. At 30–67 the chain is on the extracellular side; sequence KTGSADGCGSSWPLCHGALIPEFFPIDTIIELSHRAVS. An intrachain disulfide couples Cys37 to Cys44. Glu60 is a catalytic residue. Residue His63 coordinates heme o. The helical transmembrane segment at 68–88 threads the bilayer; sequence ALSLLMVLWLVITAWKHIGYI. Residues 89-93 are Cytoplasmic-facing; sequence KEIKP. A helical transmembrane segment spans residues 94-114; sequence LSIISVGFLLLQALIGAAAVI. Over 115–125 the chain is Extracellular; sequence WQQNDYVLALH. His125 contributes to the heme o binding site. Residues 126–146 traverse the membrane as a helical segment; sequence FGISLISFSSVFLITLIIFSI. The Cytoplasmic portion of the chain corresponds to 147–163; sequence DQKYEAAELYIKKPLRR. The chain crosses the membrane as a helical span at residues 164-184; sequence LTWLMAIIIYCGVYTGALVRH. The Extracellular segment spans residues 185–215; that stretch reads ADASLAYGGWPLPFHDLVPHSEQDWVQLTHR. His214 serves as a coordination point for heme b. The chain crosses the membrane as a helical span at residues 216 to 236; sequence IMAFIVFTIIMITYIHAVKNY. Residues 237–244 lie on the Cytoplasmic side of the membrane; the sequence is PNNRTVHY. Residues 245–265 traverse the membrane as a helical segment; sequence GYTAAFILVILQVITGALSIM. At 266–270 the chain is on the extracellular side; sequence TNVNL. A helical transmembrane segment spans residues 271 to 291; that stretch reads IIALFHALFITYLFGMTTYFI. A heme b-binding site is contributed by His276. The Cytoplasmic portion of the chain corresponds to 292 to 303; sequence MLMLRSVRSDKQ.

It belongs to the COX15/CtaA family. Type 1 subfamily. In terms of assembly, interacts with CtaB. Heme b serves as cofactor.

The protein localises to the cell membrane. The catalysed reaction is Fe(II)-heme o + 2 A + H2O = Fe(II)-heme a + 2 AH2. The protein operates within porphyrin-containing compound metabolism; heme A biosynthesis; heme A from heme O: step 1/1. Catalyzes the conversion of heme O to heme A by two successive hydroxylations of the methyl group at C8. The first hydroxylation forms heme I, the second hydroxylation results in an unstable dihydroxymethyl group, which spontaneously dehydrates, resulting in the formyl group of heme A. The chain is Heme A synthase from Staphylococcus aureus (strain bovine RF122 / ET3-1).